The following is a 55-amino-acid chain: Small integral membrane protein 11 (55 aa).

A helical membrane pass occupies residues 9 to 29; the sequence is VPLLLYILAAKTLILCLAFAG. Residues 34–54 are a coiled coil; that stretch reads QRRSLEGKLQAEKRKQSEKKA.

Expressed in brain, heart, kidney, thymus, liver, stomach, muscle, lung, testis, ovary, skin and eye.

The protein localises to the membrane. This Mus musculus (Mouse) protein is Small integral membrane protein 11.